Here is a 215-residue protein sequence, read N- to C-terminus: LexA repressor (215 aa).

A DNA-binding region (H-T-H motif) is located at residues 28–48 (RAEIAAELGFSSPNAAEEHLR). Active-site for autocatalytic cleavage activity residues include serine 133 and lysine 170.

This sequence belongs to the peptidase S24 family. Homodimer.

It carries out the reaction Hydrolysis of Ala-|-Gly bond in repressor LexA.. Its function is as follows. Represses a number of genes involved in the response to DNA damage (SOS response), including recA and lexA. In the presence of single-stranded DNA, RecA interacts with LexA causing an autocatalytic cleavage which disrupts the DNA-binding part of LexA, leading to derepression of the SOS regulon and eventually DNA repair. This Burkholderia thailandensis (strain ATCC 700388 / DSM 13276 / CCUG 48851 / CIP 106301 / E264) protein is LexA repressor.